We begin with the raw amino-acid sequence, 139 residues long: Putative pre-16S rRNA nuclease (139 aa).

It belongs to the YqgF nuclease family.

The protein resides in the cytoplasm. Could be a nuclease involved in processing of the 5'-end of pre-16S rRNA. This Legionella pneumophila (strain Paris) protein is Putative pre-16S rRNA nuclease.